Consider the following 77-residue polypeptide: Acyl carrier protein (77 aa).

The 76-residue stretch at 1-76 folds into the Carrier domain; sequence MSLEDDVKAI…DVIKYIQEHQ (76 aa). At serine 36 the chain carries O-(pantetheine 4'-phosphoryl)serine.

It belongs to the acyl carrier protein (ACP) family. Post-translationally, 4'-phosphopantetheine is transferred from CoA to a specific serine of apo-ACP by AcpS. This modification is essential for activity because fatty acids are bound in thioester linkage to the sulfhydryl of the prosthetic group.

Its subcellular location is the cytoplasm. The protein operates within lipid metabolism; fatty acid biosynthesis. Its function is as follows. Carrier of the growing fatty acid chain in fatty acid biosynthesis. The protein is Acyl carrier protein of Chlamydia trachomatis serovar L2 (strain ATCC VR-902B / DSM 19102 / 434/Bu).